Reading from the N-terminus, the 80-residue chain is MVRIRLARGGHKKTPFYHIVITDSRSARDGRFIERVGFFSPIKFSNRTGLGLRVNLERVKYWLYKGASPSDRVLKLIKNL.

This sequence belongs to the bacterial ribosomal protein bS16 family.

The polypeptide is Small ribosomal subunit protein bS16 (Blochmanniella pennsylvanica (strain BPEN)).